Consider the following 309-residue polypeptide: Homoserine kinase (309 aa).

91-101 is a binding site for ATP; it reads PIGSGLGSSAC.

Belongs to the GHMP kinase family. Homoserine kinase subfamily.

Its subcellular location is the cytoplasm. It carries out the reaction L-homoserine + ATP = O-phospho-L-homoserine + ADP + H(+). Its pathway is amino-acid biosynthesis; L-threonine biosynthesis; L-threonine from L-aspartate: step 4/5. Its function is as follows. Catalyzes the ATP-dependent phosphorylation of L-homoserine to L-homoserine phosphate. This chain is Homoserine kinase, found in Klebsiella pneumoniae (strain 342).